The primary structure comprises 202 residues: LexA repressor (202 aa).

A DNA-binding region (H-T-H motif) is located at residues 28–48 (RAEIAQRLGFRSPNAAEEHLK). Catalysis depends on for autocatalytic cleavage activity residues Ser-119 and Lys-156.

Belongs to the peptidase S24 family. In terms of assembly, homodimer.

The catalysed reaction is Hydrolysis of Ala-|-Gly bond in repressor LexA.. In terms of biological role, represses a number of genes involved in the response to DNA damage (SOS response), including recA and lexA. Binds to the 16 bp palindromic sequence 5'-CTGTATATATATACAG-3'. In the presence of single-stranded DNA, RecA interacts with LexA causing an autocatalytic cleavage which disrupts the DNA-binding part of LexA, leading to derepression of the SOS regulon and eventually DNA repair. The chain is LexA repressor from Citrobacter koseri (strain ATCC BAA-895 / CDC 4225-83 / SGSC4696).